A 93-amino-acid chain; its full sequence is Neurophysin 1 (93 aa).

7 cysteine pairs are disulfide-bonded: Cys-10-Cys-54, Cys-13-Cys-27, Cys-21-Cys-44, Cys-28-Cys-34, Cys-61-Cys-74, Cys-68-Cys-86, and Cys-75-Cys-80.

This sequence belongs to the vasopressin/oxytocin family.

Its function is as follows. Neurophysin 1 specifically binds oxytocin. This Struthio camelus (Common ostrich) protein is Neurophysin 1.